The primary structure comprises 131 residues: Holo-[acyl-carrier-protein] synthase (131 aa).

D8 and E59 together coordinate Mg(2+).

This sequence belongs to the P-Pant transferase superfamily. AcpS family. Requires Mg(2+) as cofactor.

The protein resides in the cytoplasm. The catalysed reaction is apo-[ACP] + CoA = holo-[ACP] + adenosine 3',5'-bisphosphate + H(+). In terms of biological role, transfers the 4'-phosphopantetheine moiety from coenzyme A to a Ser of acyl-carrier-protein. The polypeptide is Holo-[acyl-carrier-protein] synthase (Orientia tsutsugamushi (strain Ikeda) (Rickettsia tsutsugamushi)).